A 260-amino-acid chain; its full sequence is MPRYKLTVEYDGASFVGWQRQKNGLSVQEVIETALLAINGAPVGIRGAGRTDAGVHASAQVAHADLAREWRPDVLRDALNAHMRPALVAVVAAEPVPETFDARFSAIRRHYLYRIINRRAPLTFEAGRAWLVKRRLDARAMHEAAQVLTGRHDFSTFRAAECQAASPIRTLERLDVQAVGDLIEIRASARSFLHHQVRSMVGSLEMVGSGKWSAGDLRAALEACDRRRCGMVAPAAGLYLTGVDYPEEGEEKGAQPFFGE.

The Nucleophile role is filled by Asp52. Tyr111 serves as a coordination point for substrate.

It belongs to the tRNA pseudouridine synthase TruA family. In terms of assembly, homodimer.

The catalysed reaction is uridine(38/39/40) in tRNA = pseudouridine(38/39/40) in tRNA. Its function is as follows. Formation of pseudouridine at positions 38, 39 and 40 in the anticodon stem and loop of transfer RNAs. The sequence is that of tRNA pseudouridine synthase A from Beijerinckia indica subsp. indica (strain ATCC 9039 / DSM 1715 / NCIMB 8712).